A 237-amino-acid chain; its full sequence is Large ribosomal subunit protein uL1 (237 aa).

The protein belongs to the universal ribosomal protein uL1 family. In terms of assembly, part of the 50S ribosomal subunit.

In terms of biological role, binds directly to 23S rRNA. The L1 stalk is quite mobile in the ribosome, and is involved in E site tRNA release. Functionally, protein L1 is also a translational repressor protein, it controls the translation of the L11 operon by binding to its mRNA. This chain is Large ribosomal subunit protein uL1, found in Solibacter usitatus (strain Ellin6076).